A 92-amino-acid polypeptide reads, in one-letter code: Alpha-hemoglobin-stabilizing protein (92 aa).

The protein belongs to the AHSP family. In terms of assembly, monomer. Forms a heterodimer with free alpha-hemoglobin. Does not bind beta-hemoglobin nor alpha(2)beta(2) hemoglobin A.

Its subcellular location is the cytoplasm. In terms of biological role, acts as a chaperone to prevent the harmful aggregation of alpha-hemoglobin during normal erythroid cell development. Specifically protects free alpha-hemoglobin from precipitation. The chain is Alpha-hemoglobin-stabilizing protein (AHSP) from Bos taurus (Bovine).